Reading from the N-terminus, the 70-residue chain is Small ribosomal subunit protein bS18 (70 aa).

It belongs to the bacterial ribosomal protein bS18 family. Part of the 30S ribosomal subunit. Forms a tight heterodimer with protein bS6.

Binds as a heterodimer with protein bS6 to the central domain of the 16S rRNA, where it helps stabilize the platform of the 30S subunit. The chain is Small ribosomal subunit protein bS18 from Salinibacter ruber (strain DSM 13855 / M31).